Consider the following 461-residue polypeptide: D-phenylhydantoinase (461 aa).

Residues His-59, His-61, and Lys-151 each coordinate a divalent metal cation. Lys-151 carries the post-translational modification N6-carboxylysine. A substrate-binding site is contributed by Tyr-156. A divalent metal cation is bound by residues His-182 and His-239. Residue Ser-286 participates in substrate binding. Position 313 (Asp-313) interacts with a divalent metal cation. Position 335 (Asn-335) interacts with substrate.

This sequence belongs to the metallo-dependent hydrolases superfamily. Hydantoinase/dihydropyrimidinase family. In terms of assembly, homotetramer. Requires a divalent metal cation as cofactor. Post-translationally, carboxylation allows a single lysine to coordinate two divalent metal cations.

The enzyme catalyses D-5-phenylhydantoin + H2O = N-carbamoyl-D-phenylglycine + H(+). In terms of biological role, catalyzes the stereospecific hydrolysis of the cyclic amide bond of D-hydantoin derivatives with an aromatic side chains at the 5'-position. Has no activity on dihydropyrimidines. The physiological function is unknown. The chain is D-phenylhydantoinase from Escherichia coli (strain UTI89 / UPEC).